The primary structure comprises 264 residues: Small ribosomal subunit protein eS1 (264 aa).

An N6-acetyllysine; alternate modification is found at K34. K34 is covalently cross-linked (Glycyl lysine isopeptide (Lys-Gly) (interchain with G-Cter in SUMO2); alternate). K56 is modified (N6-acetyllysine). Y155 bears the ADP-ribosyltyrosine mark. The disordered stretch occupies residues 233-264 (GEGSSSGKATGDETGAKVERADGYEPPVQESV). Residues S236 and S237 each carry the phosphoserine modification. A compositionally biased stretch (basic and acidic residues) spans 242 to 255 (TGDETGAKVERADG). Residue K249 is modified to N6-acetyllysine; alternate. Residue K249 forms a Glycyl lysine isopeptide (Lys-Gly) (interchain with G-Cter in SUMO2); alternate linkage. A Phosphotyrosine modification is found at Y256. Position 263 is a phosphoserine (S263).

Belongs to the eukaryotic ribosomal protein eS1 family. In terms of assembly, component of the small ribosomal subunit. Mature ribosomes consist of a small (40S) and a large (60S) subunit. The 40S subunit contains about 33 different proteins and 1 molecule of RNA (18S). The 60S subunit contains about 49 different proteins and 3 molecules of RNA (28S, 5.8S and 5S). Part of the small subunit (SSU) processome, composed of more than 70 proteins and the RNA chaperone small nucleolar RNA (snoRNA) U3. ADP-ribosylated at Tyr-155 by PARP1 in presence of HPF1.

It localises to the cytoplasm. The protein resides in the nucleus. It is found in the nucleolus. Its function is as follows. Component of the small ribosomal subunit. The ribosome is a large ribonucleoprotein complex responsible for the synthesis of proteins in the cell. Part of the small subunit (SSU) processome, first precursor of the small eukaryotic ribosomal subunit. During the assembly of the SSU processome in the nucleolus, many ribosome biogenesis factors, an RNA chaperone and ribosomal proteins associate with the nascent pre-rRNA and work in concert to generate RNA folding, modifications, rearrangements and cleavage as well as targeted degradation of pre-ribosomal RNA by the RNA exosome. May play a role during erythropoiesis. The polypeptide is Small ribosomal subunit protein eS1 (Callithrix jacchus (White-tufted-ear marmoset)).